Reading from the N-terminus, the 900-residue chain is MVMNILTKIFGSRNDRTLRRMRKNVDVISRLEPEMEKLSDEELQAKTLEFRVRLEKGEKLENLLPEAFAVVRESSKRVFGMRHFDVQLLGGMVLNERCIAEMRTGEGKTLTATLPAYLNALTGRGVHVVTVNDYLAQRDAENNRPLFEFLGLSVGINLPGMPAPAKREAYAADITYGTNNEYGFDYLRDNMAFSPEERVQRKLYYALVDEVDSILIDEARTPLIISGPAEDSSELYISVNKIIPHLIRQDKEDSDTFHGEGHFSVDEKARQVNLTERGLVLVEELLVKEGIMEEGESLYSPTNIMLMHHVTAALRAHVLFARDVDYIVKDGEVIIVDEHTGRTMQGRRWSDGLHQAVEAKEKVAIQNENQTLASITFQNYFRLYEKLAGMTGTADTEAFEFSSIYKLDTIVVPTNRPMIRKDLPDLVYMTEQEKIDAIIEDIKDRSVKGQPILVGTISIEKSEVVSQALEKAGIKHSVLNAKFHAMEADIVAQAGQSGAVTIATNMAGRGTDIVLGGSWQAEVAHLENPDDEQIAEIKAAWKVRHDAVLAAGGLHIIGTERHESRRIDNQLRGRSGRQGDAGSSRFYLSMEDALMRIFASDRVSNMMRKLGMKPGEAIEHPWVTKAIANAQRKVESRNFDIRKQLLEYDDVASDQRRAIYTQRNELLDVSDISETITSIREDVFKTTIDSYIPPQSLEEMWDTEGLEQRLKNDFDLDMPIKAWLDKEPELHEETLRERIFQQALDVYHRKEEVVGDEVMRNFEKGVMLQTLDSLWKEHLAAMDYLRQGIHLRGYAQKDPKQEYKRESFSMFAAMLESLKYEVISTLSKVQVRMPEEIEALELQRREEAERLAQQQQFSHQEEDSLNTGSPAQADRKIGRNDPCPCGSGKKYKQCHGRLQK.

ATP-binding positions include Gln-87, 105-109 (GEGKT), and Asp-512. Residues 849-900 (ERLAQQQQFSHQEEDSLNTGSPAQADRKIGRNDPCPCGSGKKYKQCHGRLQK) are disordered. Residues Cys-883, Cys-885, Cys-894, and His-895 each coordinate Zn(2+). Basic residues predominate over residues 889–900 (KKYKQCHGRLQK).

Belongs to the SecA family. Monomer and homodimer. Part of the essential Sec protein translocation apparatus which comprises SecA, SecYEG and auxiliary proteins SecDF-YajC and YidC. The cofactor is Zn(2+).

Its subcellular location is the cell inner membrane. The protein localises to the cytoplasm. The catalysed reaction is ATP + H2O + cellular proteinSide 1 = ADP + phosphate + cellular proteinSide 2.. Its function is as follows. Part of the Sec protein translocase complex. Interacts with the SecYEG preprotein conducting channel. Has a central role in coupling the hydrolysis of ATP to the transfer of proteins into and across the cell membrane, serving both as a receptor for the preprotein-SecB complex and as an ATP-driven molecular motor driving the stepwise translocation of polypeptide chains across the membrane. In Pectobacterium atrosepticum (strain SCRI 1043 / ATCC BAA-672) (Erwinia carotovora subsp. atroseptica), this protein is Protein translocase subunit SecA.